Reading from the N-terminus, the 637-residue chain is Rab11 family-interacting protein 4 (637 aa).

One can recognise an EF-hand domain in the interval 49–84 (GQGEEVEKLVKYLDPNDLGRINFKDFCRGVFAMKGC). Ca(2+) is bound by residues Asp62, Asn64, Arg68, and Asp73. Residues 82–637 (KGCEELLKDV…HNPSILEIKH (556 aa)) form a necessary for interaction with RAB11A, subcellular location, homo- or heterooligomerization region. Disordered regions lie at residues 138 to 175 (EEEA…PAEK) and 219 to 256 (YGEG…SAGQ). Positions 280-617 (KINLLNDLEA…EEINFRLRQY (338 aa)) form a coiled coil. One can recognise an FIP-RBD domain in the interval 574–636 (EAKNLFAAQT…DHNPSILEIK (63 aa)).

In terms of assembly, homodimer. Forms a complex with Rab11 (RAB11A or RAB11B) and ARF6. Interacts with RAB11A; the interaction is direct. Forms a heterooligomeric complex with RAB11FIP2, RAB11FIP3 and RAB11FIP5. Interacts with ECPAS. (Microbial infection) Interacts with human cytomegalovirus/HHV-5 protein gM/UL100. In terms of tissue distribution, present at high level in testis (at protein level). Weakly expressed in other tissues.

The protein resides in the endosome. It is found in the cytoplasm. Its subcellular location is the cytoskeleton. It localises to the spindle. The protein localises to the microtubule organizing center. The protein resides in the centrosome. It is found in the recycling endosome membrane. Its subcellular location is the cleavage furrow. It localises to the midbody. The protein localises to the cytoplasmic vesicle. Acts as a regulator of endocytic traffic by participating in membrane delivery. Required for the abscission step in cytokinesis, possibly by acting as an 'address tag' delivering recycling endosome membranes to the cleavage furrow during late cytokinesis. In case of infection by HCMV (human cytomegalovirus), may participate in egress of the virus out of nucleus; this function is independent of ARF6. The polypeptide is Rab11 family-interacting protein 4 (RAB11FIP4) (Homo sapiens (Human)).